A 144-amino-acid chain; its full sequence is Protein BUD31 homolog (144 aa).

Positions 2–10 (PKVRRSRKP) match the Nuclear localization signal motif.

It belongs to the BUD31 (G10) family.

Its subcellular location is the nucleus. The chain is Protein BUD31 homolog from Branchiostoma belcheri (Amphioxus).